We begin with the raw amino-acid sequence, 246 residues long: NAD-dependent protein deacylase (246 aa).

In terms of domain architecture, Deacetylase sirtuin-type spans Met-1–Pro-245. Gly-20–Trp-39 is a binding site for NAD(+). The substrate site is built by Tyr-64 and Arg-67. Residue Gln-98 to Asp-101 participates in NAD(+) binding. His-116 acts as the Proton acceptor in catalysis. Residues Cys-124, Cys-127, Cys-146, and Cys-149 each coordinate Zn(2+). Residues Gly-186–Ser-188, Asn-212–Glu-214, and Thr-230 each bind NAD(+).

This sequence belongs to the sirtuin family. Class III subfamily. Zn(2+) is required as a cofactor.

The protein localises to the cytoplasm. It carries out the reaction N(6)-acetyl-L-lysyl-[protein] + NAD(+) + H2O = 2''-O-acetyl-ADP-D-ribose + nicotinamide + L-lysyl-[protein]. It catalyses the reaction N(6)-succinyl-L-lysyl-[protein] + NAD(+) + H2O = 2''-O-succinyl-ADP-D-ribose + nicotinamide + L-lysyl-[protein]. NAD-dependent lysine deacetylase and desuccinylase that specifically removes acetyl and succinyl groups on target proteins. Modulates the activities of several proteins which are inactive in their acylated form. The sequence is that of NAD-dependent protein deacylase from Leptospira interrogans serogroup Icterohaemorrhagiae serovar Lai (strain 56601).